A 418-amino-acid chain; its full sequence is Tyrosine--tRNA ligase (418 aa).

The 'HIGH' region signature appears at 42–51 (PTSPDLHLGH). The short motif at 226-230 (KMSKS) is the 'KMSKS' region element. Residue Lys229 coordinates ATP. The 62-residue stretch at 339 to 400 (VRLVALLTKS…GKRNFIKVRL (62 aa)) folds into the S4 RNA-binding domain.

It belongs to the class-I aminoacyl-tRNA synthetase family. TyrS type 2 subfamily. Homodimer.

It is found in the cytoplasm. It catalyses the reaction tRNA(Tyr) + L-tyrosine + ATP = L-tyrosyl-tRNA(Tyr) + AMP + diphosphate + H(+). Functionally, catalyzes the attachment of tyrosine to tRNA(Tyr) in a two-step reaction: tyrosine is first activated by ATP to form Tyr-AMP and then transferred to the acceptor end of tRNA(Tyr). The chain is Tyrosine--tRNA ligase from Xylella fastidiosa (strain Temecula1 / ATCC 700964).